The sequence spans 117 residues: Small ribosomal subunit protein uS17 (117 aa).

The segment at 97-117 (AEGLAAAHAGEPETESAATDA) is disordered.

Belongs to the universal ribosomal protein uS17 family. In terms of assembly, part of the 30S ribosomal subunit.

In terms of biological role, one of the primary rRNA binding proteins, it binds specifically to the 5'-end of 16S ribosomal RNA. This Rhodopirellula baltica (strain DSM 10527 / NCIMB 13988 / SH1) protein is Small ribosomal subunit protein uS17.